The primary structure comprises 269 residues: Cytochrome c oxidase subunit 3 (269 aa).

Helical transmembrane passes span 21-41 (PWPI…ALTM), 45-65 (IGHM…ATLW), 90-110 (GFLL…WAYF), 138-160 (PLLN…HGLV), 167-187 (ALSG…CQYI), 205-225 (FYAG…MLGI), and 247-267 (VLYC…FYWW).

The protein belongs to the cytochrome c oxidase subunit 3 family. In terms of assembly, component of the cytochrome c oxidase (complex IV, CIV), a multisubunit enzyme composed of a catalytic core of 3 subunits and several supernumerary subunits. The complex exists as a monomer or a dimer and forms supercomplexes (SCs) in the inner mitochondrial membrane with ubiquinol-cytochrome c oxidoreductase (cytochrome b-c1 complex, complex III, CIII).

The protein localises to the mitochondrion inner membrane. The enzyme catalyses 4 Fe(II)-[cytochrome c] + O2 + 8 H(+)(in) = 4 Fe(III)-[cytochrome c] + 2 H2O + 4 H(+)(out). Its function is as follows. Component of the cytochrome c oxidase, the last enzyme in the mitochondrial electron transport chain which drives oxidative phosphorylation. The respiratory chain contains 3 multisubunit complexes succinate dehydrogenase (complex II, CII), ubiquinol-cytochrome c oxidoreductase (cytochrome b-c1 complex, complex III, CIII) and cytochrome c oxidase (complex IV, CIV), that cooperate to transfer electrons derived from NADH and succinate to molecular oxygen, creating an electrochemical gradient over the inner membrane that drives transmembrane transport and the ATP synthase. Cytochrome c oxidase is the component of the respiratory chain that catalyzes the reduction of oxygen to water. Electrons originating from reduced cytochrome c in the intermembrane space (IMS) are transferred via the dinuclear copper A center (CU(A)) of subunit 2 and heme A of subunit 1 to the active site in subunit 1, a binuclear center (BNC) formed by heme A3 and copper B (CU(B)). The BNC reduces molecular oxygen to 2 water molecules using 4 electrons from cytochrome c in the IMS and 4 protons from the mitochondrial matrix. The protein is Cytochrome c oxidase subunit 3 (COX3) of Kluyveromyces lactis (strain ATCC 8585 / CBS 2359 / DSM 70799 / NBRC 1267 / NRRL Y-1140 / WM37) (Yeast).